A 239-amino-acid chain; its full sequence is AA9 family lytic polysaccharide monooxygenase C (239 aa).

Histidine 1 contributes to the Cu(2+) binding site. Residues cysteine 39 and cysteine 190 are joined by a disulfide bond. An N-linked (GlcNAc...) asparagine glycan is attached at asparagine 75. Histidine 84 is a Cu(2+) binding site. N-linked (GlcNAc...) asparagine glycosylation is present at asparagine 135. O2 is bound by residues histidine 157 and glutamine 166. Tyrosine 168 is a binding site for Cu(2+). Asparagine 194 and asparagine 229 each carry an N-linked (GlcNAc...) asparagine glycan.

The protein belongs to the polysaccharide monooxygenase AA9 family. Requires Cu(2+) as cofactor.

It is found in the secreted. It carries out the reaction [(1-&gt;4)-beta-D-glucosyl]n+m + reduced acceptor + O2 = 4-dehydro-beta-D-glucosyl-[(1-&gt;4)-beta-D-glucosyl]n-1 + [(1-&gt;4)-beta-D-glucosyl]m + acceptor + H2O.. In terms of biological role, lytic polysaccharide monooxygenase (LPMO) that depolymerizes crystalline and amorphous polysaccharides via the oxidation of scissile alpha- or beta-(1-4)-glycosidic bonds, yielding C1 or C4 oxidation products. Catalysis by LPMOs requires the reduction of the active-site copper from Cu(II) to Cu(I) by a reducing agent and H(2)O(2) or O(2) as a cosubstrate. The chain is AA9 family lytic polysaccharide monooxygenase C from Gloeophyllum trabeum (Brown rot fungus).